A 264-amino-acid polypeptide reads, in one-letter code: Putative hydro-lyase cgR_2449 (264 aa).

This sequence belongs to the D-glutamate cyclase family.

The polypeptide is Putative hydro-lyase cgR_2449 (Corynebacterium glutamicum (strain R)).